The primary structure comprises 304 residues: Calcium release-activated calcium channel protein 1 (304 aa).

The segment covering 1–11 (MHPEPAPPPNN) has biased composition (pro residues). The interval 1-49 (MHPEPAPPPNNSNPELPLSGGSSTSGSRRSRRRSGDGEPTGAPPLPPPP) is disordered. Residues 1-88 (MHPEPAPPPN…KLYLSRAKLK (88 aa)) lie on the Cytoplasmic side of the membrane. A required for generation of inwardly rectifying CRAC currents region spans residues 3 to 49 (PEPAPPPNNSNPELPLSGGSSTSGSRRSRRRSGDGEPTGAPPLPPPP). Positions 12–27 (SNPELPLSGGSSTSGS) are enriched in low complexity. The tract at residues 39–60 (PTGAPPLPPPPAVSYPDWIGQS) is AKAP5 association region. Residues 71–91 (SMQALSWRKLYLSRAKLKASS) form an interaction with STIM1 region. Residues 89-106 (ASSRTSALLSGFAMVAMV) traverse the membrane as a helical segment. Topologically, residues 107-120 (EVQLDTDHDYPPGL) are extracellular. The chain crosses the membrane as a helical span at residues 121-141 (LIVFSACTTVLVAVHLFALMI). Topologically, residues 142-174 (STCILPNIEAVSNVHNLNSVKESPHERMHRHIE) are cytoplasmic. The chain crosses the membrane as a helical span at residues 175-195 (LAWAFSTVIGTLLFLAEVVLL). The Extracellular portion of the chain corresponds to 196–237 (CWVKFLPLKRQAGQPSPTKPPTEPAVVVANSSNNGGITPGEA). Asn225 carries N-linked (GlcNAc...) asparagine glycosylation. The chain crosses the membrane as a helical span at residues 238–258 (AAIASTAIMVPCGLVFIVFAV). Topologically, residues 259–304 (HFYRSLVSHKTDRQFQELNELAEFARLQDQLDHRGDHSLTPGTHYA) are cytoplasmic. An interaction with STIM1 region spans residues 275–295 (ELNELAEFARLQDQLDHRGDH). Thr298 is subject to Phosphothreonine.

The protein belongs to the Orai family. As to quaternary structure, oligomerizes in homomeric and heteromeric ORAI complexes. Native CRAC channels most likely consist of hexameric ORAI heteromers, implying that diverse ORAI1, ORAI2 and ORAI3 subunit combinations with distinct biophysical properties can operate in a cell-type specific way. ARC channels are heteropentamers consisting of three ORAI1 and two ORAI3 subunits. Interacts with STIM1 and STIM2; this regulates channel activity. Interacts with CALM; this may displace STIM1 and STIM2 and might thereby modulate channel activity. Interacts (via N-terminus) with AKAP5 upon store depletion. Interacts with CRACR2A/EFCAB4B; the interaction is direct and takes place in absence of Ca(2+). Forms a complex with CRACR2A/EFCAB4B and STIM1 at low concentration of Ca(2+), the complex dissociates at elevated Ca(2+) concentrations. Interacts with ASPH (isoform 8). Interacts with SLC35G1. Interacts with UBQLN1. Interacts with ADCY8; interaction is calcium store depletion independent; interaction occurs in membrane raft; interaction increases markedly after store depletion; positively regulates SOCE-induced adenylate cyclase activity; contributes to the targeting of ADCY8 to discrete regions of the plasma membrane that are shielded from other calcium events. Interacts with EFHB; the interaction takes place upon Ca(2+)-store depletion. Interacts (via N- and C-termini) with ATP2C2 (via N-terminus); this interaction regulates Ca(2+) influx at the plasma membrane. Interacts with TSPAN18; this interaction regulates ORAI1 exit from the endoplasmic (ER), and/or Golgi, and trafficking to the cell surface. Post-translationally, N-glycosylated. N-glycosylation inhibits channel activity in T cells. In terms of processing, ubiquitinated. Cys-195 is oxidated, leading to inactivation of channel activity.

The protein localises to the cell membrane. It localises to the basolateral cell membrane. The catalysed reaction is Ca(2+)(in) = Ca(2+)(out). Its activity is regulated as follows. Oxidation at Cys-196 leads to inactivation of channel activity. Functionally, pore-forming subunit of two major inward rectifying Ca(2+) channels at the plasma membrane: Ca(2+) release-activated Ca(2+) (CRAC) channels and arachidonate-regulated Ca(2+)-selective (ARC) channels. Assembles with ORAI2 and ORAI3 to form hexameric CRAC channels that mediate Ca(2+) influx upon depletion of endoplasmic reticulum Ca(2+) store and channel activation by Ca(2+) sensor STIM1, a process known as store-operated Ca(2+) entry (SOCE). Various pore subunit combinations may account for distinct CRAC channel spatiotemporal and cell-type specific dynamics. ORAI1 mainly contributes to the generation of Ca(2+) plateaus involved in sustained Ca(2+) entry and is dispensable for cytosolic Ca(2+) oscillations, whereas ORAI2 and ORAI3 generate oscillatory patterns. CRAC channels assemble in Ca(2+) signaling microdomains where Ca(2+) influx is coupled to calmodulin and calcineurin signaling and activation of NFAT transcription factors recruited to ORAI1 via AKAP5. Activates NFATC2/NFAT1 and NFATC3/NFAT4-mediated transcriptional responses. CRAC channels are the main pathway for Ca(2+) influx in T cells and promote the immune response to pathogens by activating NFAT-dependent cytokine and chemokine transcription. Assembles with ORAI3 to form channels that mediate store-independent Ca(2+) influx in response to inflammatory metabolites arachidonate or its derivative leukotriene C4, termed ARC and LRC channels respectively. Plays a prominent role in Ca(2+) influx at the basolateral membrane of mammary epithelial cells independently of the Ca(2+) content of endoplasmic reticulum or Golgi stores. May mediate transepithelial transport of large quantities of Ca(2+) for milk secretion. This chain is Calcium release-activated calcium channel protein 1 (Orai1), found in Rattus norvegicus (Rat).